A 599-amino-acid polypeptide reads, in one-letter code: Aspartate--tRNA ligase (599 aa).

E175 provides a ligand contact to L-aspartate. An aspartate region spans residues 199-202 (QQFK). Positions 221 and 446 each coordinate L-aspartate. 221-223 (RDE) contacts ATP. E480 contacts ATP. R487 provides a ligand contact to L-aspartate. 532-535 (GVDR) contributes to the ATP binding site.

The protein belongs to the class-II aminoacyl-tRNA synthetase family. Type 1 subfamily. In terms of assembly, homodimer.

The protein localises to the cytoplasm. The enzyme catalyses tRNA(Asp) + L-aspartate + ATP = L-aspartyl-tRNA(Asp) + AMP + diphosphate. Functionally, catalyzes the attachment of L-aspartate to tRNA(Asp) in a two-step reaction: L-aspartate is first activated by ATP to form Asp-AMP and then transferred to the acceptor end of tRNA(Asp). In Streptomyces griseus subsp. griseus (strain JCM 4626 / CBS 651.72 / NBRC 13350 / KCC S-0626 / ISP 5235), this protein is Aspartate--tRNA ligase.